We begin with the raw amino-acid sequence, 415 residues long: Diaminopimelate decarboxylase (415 aa).

Lys54 bears the N6-(pyridoxal phosphate)lysine mark. Pyridoxal 5'-phosphate contacts are provided by residues Gly223 and 264-267 (EPGR). The substrate site is built by Arg267, Arg303, and Tyr307. Residue Cys338 is the Proton donor of the active site. Positions 339 and 374 each coordinate substrate. Residue Tyr374 participates in pyridoxal 5'-phosphate binding.

The protein belongs to the Orn/Lys/Arg decarboxylase class-II family. LysA subfamily. Homodimer. Requires pyridoxal 5'-phosphate as cofactor.

It catalyses the reaction meso-2,6-diaminopimelate + H(+) = L-lysine + CO2. The protein operates within amino-acid biosynthesis; L-lysine biosynthesis via DAP pathway; L-lysine from DL-2,6-diaminopimelate: step 1/1. Specifically catalyzes the decarboxylation of meso-diaminopimelate (meso-DAP) to L-lysine. This chain is Diaminopimelate decarboxylase, found in Buchnera aphidicola subsp. Acyrthosiphon pisum (strain APS) (Acyrthosiphon pisum symbiotic bacterium).